Consider the following 979-residue polypeptide: UPF0182 protein MT0070 (979 aa).

Transmembrane regions (helical) follow at residues 19 to 41 (LVTA…DIYV), 63 to 85 (LAIV…LLAY), 114 to 136 (LFGW…FDWV), 174 to 196 (WLFV…FGGL), 208 to 230 (AARV…AYWL), 261 to 280 (LVLV…AIFL), and 285 to 307 (IPAM…WPLL). The segment at 894–948 (VFGPGTGRVATXPGGDAASAPPPGAGGPAPPQGVPPPRTTQPPAAPPRGPDVPPA) is disordered. The span at 913 to 946 (APPPGAGGPAPPQGVPPPRTTQPPAAPPRGPDVP) shows a compositional bias: pro residues.

The protein belongs to the UPF0182 family.

The protein localises to the cell membrane. The protein is UPF0182 protein MT0070 of Mycobacterium tuberculosis (strain CDC 1551 / Oshkosh).